The following is a 335-amino-acid chain: UDP-N-acetylglucosamine--N-acetylmuramyl-(pentapeptide) pyrophosphoryl-undecaprenol N-acetylglucosamine transferase (335 aa).

UDP-N-acetyl-alpha-D-glucosamine-binding positions include T9–G11, N123, S176, and Q274.

This sequence belongs to the glycosyltransferase 28 family. MurG subfamily.

The protein localises to the cell inner membrane. It catalyses the reaction di-trans,octa-cis-undecaprenyl diphospho-N-acetyl-alpha-D-muramoyl-L-alanyl-D-glutamyl-meso-2,6-diaminopimeloyl-D-alanyl-D-alanine + UDP-N-acetyl-alpha-D-glucosamine = di-trans,octa-cis-undecaprenyl diphospho-[N-acetyl-alpha-D-glucosaminyl-(1-&gt;4)]-N-acetyl-alpha-D-muramoyl-L-alanyl-D-glutamyl-meso-2,6-diaminopimeloyl-D-alanyl-D-alanine + UDP + H(+). It participates in cell wall biogenesis; peptidoglycan biosynthesis. Its function is as follows. Cell wall formation. Catalyzes the transfer of a GlcNAc subunit on undecaprenyl-pyrophosphoryl-MurNAc-pentapeptide (lipid intermediate I) to form undecaprenyl-pyrophosphoryl-MurNAc-(pentapeptide)GlcNAc (lipid intermediate II). This Campylobacter fetus subsp. fetus (strain 82-40) protein is UDP-N-acetylglucosamine--N-acetylmuramyl-(pentapeptide) pyrophosphoryl-undecaprenol N-acetylglucosamine transferase.